The following is a 135-amino-acid chain: MPPKSRTAGGARKTRRKEKKNVSHGHAYIKSTFNNTIVSITDPSGAVIAWASSGQVGFKGSRKSTPFAAQLAAEAAARRAQEHGMKKVDVFVKGPGSGRETAIRSLQATGLEVGSISDVTPQAHNGVRPPKRRRV.

The disordered stretch occupies residues methionine 1 to histidine 26. The segment covering arginine 12–serine 23 has biased composition (basic residues).

Belongs to the universal ribosomal protein uS11 family. Part of the 30S ribosomal subunit. Interacts with proteins S7 and S18. Binds to IF-3.

Functionally, located on the platform of the 30S subunit, it bridges several disparate RNA helices of the 16S rRNA. Forms part of the Shine-Dalgarno cleft in the 70S ribosome. The protein is Small ribosomal subunit protein uS11 of Beutenbergia cavernae (strain ATCC BAA-8 / DSM 12333 / CCUG 43141 / JCM 11478 / NBRC 16432 / NCIMB 13614 / HKI 0122).